Reading from the N-terminus, the 410-residue chain is Trans-splicing factor Raa2, chloroplastic (410 aa).

2 disordered regions span residues 1–40 (MRTRAGAFFGKQRSTSPSGSSTSASRQWLRSSPGRTQRPA) and 56–106 (AADH…QQQV). Residues 1–46 (MRTRAGAFFGKQRSTSPSGSSTSASRQWLRSSPGRTQRPAAHRVLA) constitute a chloroplast transit peptide. Over residues 14–25 (STSPSGSSTSAS) the composition is skewed to low complexity. The span at 26–35 (RQWLRSSPGR) shows a compositional bias: polar residues. Low complexity predominate over residues 96–106 (RQAQRRQQQQV).

This sequence belongs to the pseudouridine synthase TruB family. As to quaternary structure, possibly associated with other factors required for trans-splicing.

The protein resides in the plastid. Its subcellular location is the chloroplast. Functionally, required for trans-splicing of exons 2 and 3 of the chloroplast encoded psaA mRNA (a group II intron). It is not known if this protein has pseudouridine activity; mutation of the potential active site residue does not cause loss of trans-splicing. The chain is Trans-splicing factor Raa2, chloroplastic (RAA2) from Chlamydomonas reinhardtii (Chlamydomonas smithii).